Here is a 1349-residue protein sequence, read N- to C-terminus: Serine/threonine-protein kinase GIN4 (1349 aa).

Residues 1–20 (MPHSRQPSISSSIMSQSNHN) show a composition bias toward low complexity. The disordered stretch occupies residues 1–30 (MPHSRQPSISSSIMSQSNHNHPQKIGPWKL). Ser10, Ser11, Ser12, and Ser15 each carry phosphoserine. The region spanning 28-288 (WKLGKTLGRG…TEKILRHPLL (261 aa)) is the Protein kinase domain. ATP contacts are provided by residues 34–42 (LGRGATGRV) and Lys57. Residue Thr69 is modified to Phosphothreonine. Asp158 serves as the catalytic Proton acceptor. Thr191 carries the post-translational modification Phosphothreonine. Ser294, Ser300, and Ser303 each carry phosphoserine. Disordered stretches follow at residues 366–498 (QEDN…KAKP) and 510–532 (SNFS…YMID). Positions 369 to 384 (NTNNNSPKKSTSFNNK) are enriched in low complexity. Ser388, Ser390, and Ser393 each carry phosphoserine. Thr397 bears the Phosphothreonine mark. Composition is skewed to polar residues over residues 406-418 (ISVS…QYKS) and 426-442 (ANRN…SANN). Phosphoserine occurs at positions 407 and 409. Residue Thr412 is modified to Phosphothreonine. Ser413 is subject to Phosphoserine. Positions 443–470 (SPRKSPYKSPYRSPYRSPYKSPSKRYSY) are enriched in low complexity. 5 positions are modified to phosphoserine: Ser455, Ser469, Ser473, Ser477, and Ser485. The span at 471 to 488 (NQSPTKSPYGRRSNSQRQ) shows a compositional bias: polar residues. Position 556 is a phosphoserine (Ser556). Residues 570 to 585 (RNSIIGKNNNNSNSNK) show a composition bias toward low complexity. The disordered stretch occupies residues 570-593 (RNSIIGKNNNNSNSNKRMSKRKSI). At Ser634 the chain carries Phosphoserine. Residues 661–701 (EEKEAKEYERLMELERKKHEAELKARRELEKKKRRQKRRSI) adopt a coiled-coil conformation. The segment at 712 to 737 (KNDADPNNSEQELVDEGIKQPKRQSK) is disordered. 2 positions are modified to phosphoserine: Ser720 and Ser746. Residues 756 to 798 (TLEDVENLKRRSASQPVPKRRQTPVLTRRPVSRLDPLWQAHEN) form a disordered region. Residues Thr778, Thr869, and Thr876 each carry the phosphothreonine modification. Ser891 bears the Phosphoserine mark. Residue Thr941 is modified to Phosphothreonine. Position 973 is a phosphoserine (Ser973). Phosphothreonine is present on residues Thr990 and Thr992. Ser999 carries the post-translational modification Phosphoserine. A disordered region spans residues 1011 to 1229 (RTSYYDGSGK…AESKEEKPKS (219 aa)). The segment covering 1024 to 1040 (RASTTKRYNVHSSSGQR) has biased composition (polar residues). Residues 1044-1053 (KVPDLPKNDY) show a composition bias toward basic and acidic residues. Thr1056 is modified (phosphothreonine). A phosphoserine mark is found at Ser1059, Ser1074, Ser1077, Ser1078, Ser1080, and Ser1094. The segment covering 1083–1094 (VFDKIKLPDGKS) has biased composition (basic and acidic residues). Thr1095 is subject to Phosphothreonine. Phosphoserine is present on residues Ser1097 and Ser1098. Thr1106 is subject to Phosphothreonine. Polar residues predominate over residues 1134–1149 (IESSQPMSKVRGNNSS). Ser1154 carries the post-translational modification Phosphoserine. The segment covering 1202 to 1215 (NNTNAATNTTTQQQ) has biased composition (low complexity). Ser1218 is subject to Phosphoserine.

This sequence belongs to the protein kinase superfamily. CAMK Ser/Thr protein kinase family. NIM1 subfamily. In terms of assembly, associates with the septin complex which consists of CDC3, CDC10, CDC11, CDC12, and SEP7. Hyperphosphorylated during mitosis at dozens of sites. Among these, 7 have perfect or minimal CDK consensus sites and are CDC28 targets.

The protein localises to the cytoplasm. It is found in the bud neck. It carries out the reaction L-seryl-[protein] + ATP = O-phospho-L-seryl-[protein] + ADP + H(+). The catalysed reaction is L-threonyl-[protein] + ATP = O-phospho-L-threonyl-[protein] + ADP + H(+). Serine/threonine-protein kinase which regulates the localization and the function of the septins during mitosis. Involved in the formation of the septin ring but not the basal septin band. Phosphorylates septins CDC11 and SEP7. Required for the transition from pseudohyphae to hyphae. Acts upstream of IRS4 and INP51 in regulating cell wall integrity responses. Involved in propolis-induced cell death. In Candida albicans (strain SC5314 / ATCC MYA-2876) (Yeast), this protein is Serine/threonine-protein kinase GIN4 (GIN4).